The chain runs to 150 residues: UPF0201 protein APE_1751 (150 aa).

It belongs to the UPF0201 family.

The protein is UPF0201 protein APE_1751 of Aeropyrum pernix (strain ATCC 700893 / DSM 11879 / JCM 9820 / NBRC 100138 / K1).